Here is a 416-residue protein sequence, read N- to C-terminus: Multifunctional CCA protein (416 aa).

Residues glycine 8 and arginine 11 each coordinate ATP. Glycine 8 and arginine 11 together coordinate CTP. Residues aspartate 21 and aspartate 23 each contribute to the Mg(2+) site. The ATP site is built by arginine 91, arginine 137, and arginine 140. CTP-binding residues include arginine 91, arginine 137, and arginine 140. The region spanning 228–329 (TGVHTLMVLA…VKIFDKADFW (102 aa)) is the HD domain.

It belongs to the tRNA nucleotidyltransferase/poly(A) polymerase family. Bacterial CCA-adding enzyme type 1 subfamily. As to quaternary structure, monomer. Can also form homodimers and oligomers. It depends on Mg(2+) as a cofactor. Requires Ni(2+) as cofactor.

The enzyme catalyses a tRNA precursor + 2 CTP + ATP = a tRNA with a 3' CCA end + 3 diphosphate. It carries out the reaction a tRNA with a 3' CCA end + 2 CTP + ATP = a tRNA with a 3' CCACCA end + 3 diphosphate. Its function is as follows. Catalyzes the addition and repair of the essential 3'-terminal CCA sequence in tRNAs without using a nucleic acid template. Adds these three nucleotides in the order of C, C, and A to the tRNA nucleotide-73, using CTP and ATP as substrates and producing inorganic pyrophosphate. tRNA 3'-terminal CCA addition is required both for tRNA processing and repair. Also involved in tRNA surveillance by mediating tandem CCA addition to generate a CCACCA at the 3' terminus of unstable tRNAs. While stable tRNAs receive only 3'-terminal CCA, unstable tRNAs are marked with CCACCA and rapidly degraded. This chain is Multifunctional CCA protein, found in Shewanella baltica (strain OS195).